The sequence spans 412 residues: MYVTGNLAGNTIAMVLAGGKGERLAPLTLRRPKPGVAFGGKYKIIDFVLSNMFNSGIKKVYILTQYRAYSLMKHIRESWGKWAGLGEFFVAISPETSSESEEWFKGTADAINHYLRFIESSDADYVAIFGGDHIYRMDVSQMIGYHRRNRADITIAALEVPVEEARRFGVFCVDDDNRVTAFEEKPANPVTIPGRETCFASMGNYIFSTRRLIEVLQEGKKLHADLDFGKHVIPMMLAKKDRVFAYNFNDNLIPGMKPEERGYWKDVGTIDSYYEANMELIHVSPQLNLYNYKWPILTNQGNYPPAKTVFDEDGRRGMNIDSYVCAGCITSGSVVRRSIVGPLTKVNSYSLVEDSILFENVNVGRNVKIRRAIIDKNITIPDGTTIGYDHGEDRRRGYTVTESGIVVVSPAE.

Alpha-D-glucose 1-phosphate contacts are provided by residues glycine 169, 184 to 185 (EK), and serine 201.

The protein belongs to the bacterial/plant glucose-1-phosphate adenylyltransferase family. In terms of assembly, homotetramer.

The catalysed reaction is alpha-D-glucose 1-phosphate + ATP + H(+) = ADP-alpha-D-glucose + diphosphate. Its pathway is glycan biosynthesis; glycogen biosynthesis. Involved in the biosynthesis of ADP-glucose, a building block required for the elongation reactions to produce glycogen. Catalyzes the reaction between ATP and alpha-D-glucose 1-phosphate (G1P) to produce pyrophosphate and ADP-Glc. The sequence is that of Glucose-1-phosphate adenylyltransferase from Geobacter metallireducens (strain ATCC 53774 / DSM 7210 / GS-15).